The chain runs to 245 residues: Probable phosphatase YcdX (245 aa).

Residues histidine 7, histidine 9, histidine 15, histidine 40, glutamate 73, histidine 101, histidine 131, aspartate 192, and histidine 194 each coordinate Zn(2+).

This sequence belongs to the PHP family. As to quaternary structure, homotrimer. Requires Zn(2+) as cofactor.

The protein is Probable phosphatase YcdX of Escherichia coli O139:H28 (strain E24377A / ETEC).